The sequence spans 352 residues: Tropomodulin-3 (352 aa).

At serine 25 the chain carries Phosphoserine.

It belongs to the tropomodulin family. As to quaternary structure, binds to the N-terminus of tropomyosin and to actin. Interacts with FLII. As to expression, ubiquitous.

The protein localises to the cytoplasm. It is found in the cytoskeleton. Blocks the elongation and depolymerization of the actin filaments at the pointed end. The Tmod/TM complex contributes to the formation of the short actin protofilament, which in turn defines the geometry of the membrane skeleton. The chain is Tropomodulin-3 (Tmod3) from Mus musculus (Mouse).